A 496-amino-acid chain; its full sequence is MATIKFPIVFSVVCLFLLCNGSLAQLLSQSTSQWQSSRRGSPRECRFDRLQAFEPIRTVRSQAGTTEFFDVSNELFQCTGVFVVRRVIEPRGLLLPHYSNGATLVYVIQGRGITGPTFPGCPETYQQQFQQSEQDQQLEGQSQSHKFRDEHQKIHRFQQGDVVALPAGVAHWCYNDGDAPIVAIYVTDIYNSANQLDPRHRDFFLAGNNKIGQQLYRYEARDNSKNVFGGFSVELLSEALGISSGVARQLQCQNDQRGEIVRVEHGLSLLQPYASLQEQQQEQVQSRDYGQTQYQQKQLQGSCSNGLDETFCTMRVRQNIDNPNLADTYNPRAGRITYLNGQKFPILNLVQMSAVKVNLYQNALLSPFWNINAHSVVYITQGRARVQVVNNNGKTVFDGELRRGQLLIIPQHHVVIKKAQREGCSYIALKTNPDSMVSHMAGKNSIFRALPDDVVANAYRISREEARRLKHNRGDELGVFTPSHAYKSYQDISVSA.

The first 24 residues, 1–24, serve as a signal peptide directing secretion; that stretch reads MATIKFPIVFSVVCLFLLCNGSLA. Cystine bridges form between C45–C78 and C121–C312. Cupin type-1 domains follow at residues 50–248 and 318–467; these read LQAF…GVAR and QNID…EEAR.

This sequence belongs to the 11S seed storage protein (globulins) family. Hexamer; each subunit is composed of an acidic and a basic chain derived from a single precursor and linked by a disulfide bond.

Seed storage protein. The protein is Glutelin type-A 3 (GLUA3) of Oryza sativa subsp. japonica (Rice).